The chain runs to 145 residues: Large ribosomal subunit protein uL15 (145 aa).

A disordered region spans residues 20–54 (GRGMASGKGKTATRGHKGQNSRSGGGVRPGFEGGQ). Gly residues predominate over residues 42 to 52 (SGGGVRPGFEG).

It belongs to the universal ribosomal protein uL15 family. As to quaternary structure, part of the 50S ribosomal subunit.

In terms of biological role, binds to the 23S rRNA. This is Large ribosomal subunit protein uL15 from Mycoplasma mycoides subsp. mycoides SC (strain CCUG 32753 / NCTC 10114 / PG1).